The chain runs to 385 residues: Basigin (385 aa).

Positions 1–21 (MAAALFVLLGFALLGTHGASG) are cleaved as a signal peptide. Positions 37-120 (GGSVELHCEA…SNDPDRNHLT (84 aa)) constitute an Ig-like domain. Cystine bridges form between Cys44/Cys108, Cys157/Cys203, and Cys242/Cys301. The Ig-like C2-type domain maps to 138 to 219 (EPGTVFTTVE…MGTANIQLHG (82 aa)). Over 138–323 (EPGTVFTTVE…ITLRVRSHLA (186 aa)) the chain is Extracellular. A glycan (N-linked (GlcNAc...) asparagine) is linked at Asn160. The segment at 195-199 (DDQWG) is essential for interaction with KDR/VEGFR2. One can recognise an Ig-like V-type domain in the interval 221–315 (PRVKAVKSSE…SKGSDQAIIT (95 aa)). N-linked (GlcNAc...) asparagine glycosylation is found at Asn268 and Asn302. Residues 324–344 (ALWPFLGIVAEVLVLVTIIFI) traverse the membrane as a helical segment. Over 345-385 (YEKRRKPEDVLDDDDAGSAPLKSSGQHQNDKGKNVRQRNSS) the chain is Cytoplasmic. The interval 353–385 (DVLDDDDAGSAPLKSSGQHQNDKGKNVRQRNSS) is disordered. Phosphoserine occurs at positions 362 and 368.

Homooligomer. Interacts with NXNL1. Interacts with SLC2A1 and SLC16A1/GLUT1. Interacts with XKR8; promoting its localization at the cell membrane. In terms of assembly, (Microbial infection) Interacts with P.falciparum (isolate 3D7) RH5/PfRH5; the interaction is required for the invasion of the host erythrocytes by the parasite at the merozoite stage. As to quaternary structure, homooligomer. Forms heterooligomers with isoform 3. Interacts with VEGFA and KDR/VEGFR2. Interacts with PPIA/CYPA. Interacts with PPIL2; regulates BSG transport to the cell membrane. Interacts with SLC16A1; interaction mediates SLC16A3 targeting to the plasma membrane. Interacts with SLC16A12. Interacts with SLC16A11. Interacts with AJAP1. Interacts with SLC1A3, ATP1B2, MAG and L1CAM. Interacts with SLC16A3; interaction mediates SLC16A3 targeting to the plasma membrane. (Microbial infection) Interacts with P.falciparum (isolates 3D7 or 7G8) RH5/PfRH5; the interaction is required for the invasion of the host erythrocytes by the parasite at the merozoite stage. In terms of assembly, (Microbial infection) Does not interact with severe acute respiratory syndrome coronavirus 2 (SARS-CoV-2) spike glycoprotein, even if previous works were based on a putative interaction. As to quaternary structure, forms heterooligomers with isoform 2. Interacts with SLC16A6; this interaction mediates targeting to the plasma membrane. N-glycosylated. Retina-specific. Expressed in retinal cone photoreceptors (at protein level). As to expression, expressed in erythrocytes (at protein level). Highly expressed in melanoma cell lines (at protein level). Highly expressed in the heart, kidney, skeletal muscle and testis. In terms of tissue distribution, highly expressed in the bone marrow, fetal liver, lung, testis and thymus.

It localises to the melanosome. Its subcellular location is the cell membrane. It is found in the photoreceptor inner segment. The protein resides in the cell projection. The protein localises to the cilium. It localises to the photoreceptor outer segment. Its subcellular location is the endosome. It is found in the endoplasmic reticulum membrane. The protein resides in the basolateral cell membrane. Essential for normal retinal maturation and development. Acts as a retinal cell surface receptor for NXNL1 and plays an important role in NXNL1-mediated survival of retinal cone photoreceptors. In association with glucose transporter SLC16A1/GLUT1 and NXNL1, promotes retinal cone survival by enhancing aerobic glycolysis and accelerating the entry of glucose into photoreceptors. May act as a potent stimulator of IL6 secretion in multiple cell lines that include monocytes. Functionally, (Microbial infection) Erythrocyte receptor for P.falciparum RH5 which is essential for erythrocyte invasion by the merozoite stage of P.falciparum isolates 3D7 and Dd2. In terms of biological role, signaling receptor for cyclophilins, essential for PPIA/CYPA and PPIB/CYPB-dependent signaling related to chemotaxis and adhesion of immune cells. Plays an important role in targeting monocarboxylate transporters SLC16A1/GLUT1, SLC16A11 and SLC16A12 to the plasma membrane. Acts as a coreceptor for vascular endothelial growth factor receptor 2 (KDR/VEGFR2) in endothelial cells enhancing its VEGFA-mediated activation and downstream signaling. Promotes angiogenesis through EPAS1/HIF2A-mediated up-regulation of VEGFA (isoform VEGF-165 and VEGF-121) and KDR/VEGFR2 in endothelial cells. Plays a key role in regulating tumor growth, invasion, metastasis and neoangiogenesis by stimulating the production and release of extracellular matrix metalloproteinases and KDR/VEGFR2 by both tumor cells and stromal cells (fibroblasts and endothelial cells). Its function is as follows. (Microbial infection) Erythrocyte receptor for P.falciparum RH5 which is essential for erythrocyte invasion by the merozoite stage of P.falciparum isolates 3D7, Dd2, 7G8 and HB3. Binding of P.falciparum RH5 results in BSG dimerization which triggers an increase in intracellular Ca(2+) in the erythrocyte. This essential step leads to a rearrangement of the erythrocyte cytoskeleton required for the merozoite invasion. (Microbial infection) Can facilitate human SARS coronavirus (SARS-CoV-1) infection via its interaction with virus-associated PPIA/CYPA. Functionally, (Microbial infection) Can facilitate HIV-1 infection via its interaction with virus-associated PPIA/CYPA. In terms of biological role, (Microbial infection) First described as a receptor for severe acute respiratory syndrome coronavirus 2 (SARS-CoV-2), it is not required for SARS-CoV-2 infection. Its function is as follows. (Microbial infection) Acts as a receptor for measles virus. (Microbial infection) Promotes entry of pentamer-expressing human cytomegalovirus (HCMV) into epithelial and endothelial cells. The protein is Basigin of Homo sapiens (Human).